Consider the following 120-residue polypeptide: Ribosome-binding factor A (120 aa).

Belongs to the RbfA family. As to quaternary structure, monomer. Binds 30S ribosomal subunits, but not 50S ribosomal subunits or 70S ribosomes.

The protein resides in the cytoplasm. One of several proteins that assist in the late maturation steps of the functional core of the 30S ribosomal subunit. Associates with free 30S ribosomal subunits (but not with 30S subunits that are part of 70S ribosomes or polysomes). Required for efficient processing of 16S rRNA. May interact with the 5'-terminal helix region of 16S rRNA. In Chlamydia abortus (strain DSM 27085 / S26/3) (Chlamydophila abortus), this protein is Ribosome-binding factor A.